The primary structure comprises 266 residues: Phosphatidate cytidylyltransferase (266 aa).

The next 8 helical transmembrane spans lie at 16–36 (FVLI…LFWA), 52–72 (LFQV…WVAA), 78–98 (PIEC…YQKA), 101–121 (SEAI…FGVY), 125–145 (GAVA…GAFF), 164–184 (LEGA…VGMG), 186–206 (LSGG…VAVF), and 237–257 (LDSM…LEIW).

Belongs to the CDS family.

The protein resides in the cell inner membrane. It catalyses the reaction a 1,2-diacyl-sn-glycero-3-phosphate + CTP + H(+) = a CDP-1,2-diacyl-sn-glycerol + diphosphate. The protein operates within phospholipid metabolism; CDP-diacylglycerol biosynthesis; CDP-diacylglycerol from sn-glycerol 3-phosphate: step 3/3. This is Phosphatidate cytidylyltransferase (cdsA) from Helicobacter pylori (strain ATCC 700392 / 26695) (Campylobacter pylori).